A 337-amino-acid polypeptide reads, in one-letter code: Ferredoxin--NADP reductase (337 aa).

The FAD site is built by aspartate 35, glutamine 43, tyrosine 48, valine 88, phenylalanine 123, aspartate 289, and threonine 330.

The protein belongs to the ferredoxin--NADP reductase type 2 family. As to quaternary structure, homodimer. FAD is required as a cofactor.

It catalyses the reaction 2 reduced [2Fe-2S]-[ferredoxin] + NADP(+) + H(+) = 2 oxidized [2Fe-2S]-[ferredoxin] + NADPH. In Paramagnetospirillum magneticum (strain ATCC 700264 / AMB-1) (Magnetospirillum magneticum), this protein is Ferredoxin--NADP reductase.